A 424-amino-acid polypeptide reads, in one-letter code: Pachytene checkpoint protein 2 homolog (424 aa).

Residue 171 to 178 (GPPGTGKT) coordinates ATP.

Belongs to the AAA ATPase family. PCH2 subfamily.

Plays a key role in chromosome recombination and chromosome structure development during meiosis. Required at early steps in meiotic recombination that leads to non-crossovers pathways. Also needed for efficient completion of homologous synapsis by influencing crossover distribution along the chromosomes affecting both crossovers and non-crossovers pathways. The chain is Pachytene checkpoint protein 2 homolog (trip13) from Danio rerio (Zebrafish).